The following is a 101-amino-acid chain: UPF0060 membrane protein ACIAD1364 (101 aa).

Helical transmembrane passes span Trp-24 to Pro-44, Ile-50 to Asp-70, and Ile-79 to Leu-99.

It belongs to the UPF0060 family.

Its subcellular location is the cell inner membrane. In Acinetobacter baylyi (strain ATCC 33305 / BD413 / ADP1), this protein is UPF0060 membrane protein ACIAD1364.